The following is a 372-amino-acid chain: Enolase (372 aa).

Substrate contacts are provided by His95 and Glu104. Glu147 (proton donor) is an active-site residue. Mg(2+) is bound by residues Asp182, Glu232, and Asp257. Residues Glu232 and Asp257 each coordinate substrate. The active-site Proton acceptor is the Lys282. Residues 309–312 (SHRS) and Lys333 each bind substrate.

This sequence belongs to the enolase family. In terms of assembly, homodimer. Mg(2+) serves as cofactor.

It is found in the cytoplasm. It carries out the reaction (2R)-2-phosphoglycerate = phosphoenolpyruvate + H2O. It participates in carbohydrate degradation; glycolysis; pyruvate from D-glyceraldehyde 3-phosphate: step 4/5. The chain is Enolase (ENO) from Chlamydomonas reinhardtii (Chlamydomonas smithii).